The primary structure comprises 238 residues: Peroxisomal coenzyme A diphosphatase NUDT7 (238 aa).

Lys20 is subject to N6-succinyllysine. In terms of domain architecture, Nudix hydrolase spans 37–172 (YNKYSVLLPL…VTRLGHRFIN (136 aa)). The Nudix box motif lies at 77-98 (KRDPTDMDDAATALREAQEEVG). Residues Glu92 and Glu96 each coordinate Mg(2+). Positions 236 to 238 (SRL) match the Microbody targeting signal motif.

The protein belongs to the Nudix hydrolase family. PCD1 subfamily. As to quaternary structure, monomer. Mn(2+) is required as a cofactor. Mg(2+) serves as cofactor. As to expression, expressed in liver, kidney, pancreas, pituitary, small intestine, spleen, heart and placenta. Weakly expressed in brain.

It localises to the peroxisome. It catalyses the reaction hexanoyl-CoA + H2O = hexanoyl-4'-phosphopantetheine + adenosine 3',5'-bisphosphate + 2 H(+). The enzyme catalyses octanoyl-CoA + H2O = S-octanoyl-4'-phosphopantetheine + adenosine 3',5'-bisphosphate + 2 H(+). It carries out the reaction butanoyl-CoA + H2O = S-butanoyl-4'-phosphopantetheine + adenosine 3',5'-bisphosphate + 2 H(+). The catalysed reaction is decanoyl-CoA + H2O = decanoyl-4'-phosphopantetheine + adenosine 3',5'-bisphosphate + 2 H(+). It catalyses the reaction dodecanoyl-CoA + H2O = S-dodecanoyl-4'-phosphopantetheine + adenosine 3',5'-bisphosphate + 2 H(+). The enzyme catalyses tetradecanoyl-CoA + H2O = tetradecanoyl-4'-phosphopantetheine + adenosine 3',5'-bisphosphate + 2 H(+). It carries out the reaction choloyl-CoA + H2O = S-choloyl-4'-phosphopantetheine + adenosine 3',5'-bisphosphate + 2 H(+). The catalysed reaction is 3alpha,7alpha,12alpha-trihydroxy-5beta-cholestan-26-oyl-CoA + H2O = 3alpha,7alpha,12alpha-trihydroxy-5beta-cholestan-26-oyl-4'-phosphopantetheine + adenosine 3',5'-bisphosphate + 2 H(+). It catalyses the reaction acetyl-CoA + H2O = S-acetyl-4'-phosphopantetheine + adenosine 3',5'-bisphosphate + 2 H(+). The enzyme catalyses CoA + H2O = (R)-4'-phosphopantetheine + adenosine 3',5'-bisphosphate + 2 H(+). It carries out the reaction propanoyl-CoA + H2O = propanoyl-4'-phosphopantetheine + adenosine 3',5'-bisphosphate + 2 H(+). The catalysed reaction is malonyl-CoA + H2O = malonyl-4'-phosphopantetheine + adenosine 3',5'-bisphosphate + 2 H(+). It catalyses the reaction succinyl-CoA + H2O = succinyl-4'-phosphopantetheine + adenosine 3',5'-bisphosphate + 2 H(+). The enzyme catalyses a 5'-end CoA-ribonucleoside in mRNA + H2O = a 5'-end phospho-adenosine-phospho-ribonucleoside in mRNA + (R)-4'-phosphopantetheine + 2 H(+). With respect to regulation, inhibited by fluoride. Fatty acyl-coenzyme A (CoA) diphosphatase that hydrolyzes fatty acyl-CoA to yield acyl-4'-phosphopantetheine and adenosine 3',5'-bisphosphate. Cleaves CoA, CoA esters and oxidized CoA with similar efficiencies. Preferentially hydrolyzes medium-chain acyl-CoAs and bile acid-CoAs. Has no activity toward NDP-sugars, CDP-alcohols, (deoxy)nucleoside 5'-triphosphates, nucleoside 5'-di or monophosphates, diadenosine polyphosphates, NAD, NADH, NADP, NADPH or thymidine-5'-monophospho-p-nitrophenyl ester. May be required to eliminate oxidized CoA from peroxisomes, or regulate CoA and acyl-CoA levels in this organelle in response to metabolic demand. Does not play a role in U8 snoRNA decapping activity. Binds U8 snoRNA. Exhibits decapping activity towards dpCoA-capped RNAs in vitro. This Homo sapiens (Human) protein is Peroxisomal coenzyme A diphosphatase NUDT7.